A 120-amino-acid polypeptide reads, in one-letter code: Late histone H2A.2.2 (120 aa).

Residues M1–S18 show a composition bias toward basic residues. A disordered region spans residues M1–G22. Position 2 is an N-acetylserine (S2). S2 is subject to Phosphoserine. Q104 is subject to N5-methylglutamine. Residue K119 forms a Glycyl lysine isopeptide (Lys-Gly) (interchain with G-Cter in ubiquitin) linkage.

The protein belongs to the histone H2A family. As to quaternary structure, the nucleosome is a histone octamer containing two molecules each of H2A, H2B, H3 and H4 assembled in one H3-H4 heterotetramer and two H2A-H2B heterodimers. The octamer wraps approximately 147 bp of DNA. Monoubiquitination of Lys-119 gives a specific tag for epigenetic transcriptional repression. Post-translationally, phosphorylation of Ser-2 directly represses transcription.

It localises to the nucleus. It is found in the chromosome. Its function is as follows. Core component of nucleosome. Nucleosomes wrap and compact DNA into chromatin, limiting DNA accessibility to the cellular machineries which require DNA as a template. Histones thereby play a central role in transcription regulation, DNA repair, DNA replication and chromosomal stability. DNA accessibility is regulated via a complex set of post-translational modifications of histones, also called histone code, and nucleosome remodeling. This is Late histone H2A.2.2 from Psammechinus miliaris (Green sea urchin).